The primary structure comprises 213 residues: Orotate phosphoribosyltransferase (213 aa).

Lysine 26 contacts 5-phospho-alpha-D-ribose 1-diphosphate. 34 to 35 is an orotate binding site; it reads FF. 5-phospho-alpha-D-ribose 1-diphosphate is bound by residues 72–73, arginine 99, lysine 100, lysine 103, histidine 105, and 124–132; these read YK and DDVITAGTA. 2 residues coordinate orotate: threonine 128 and arginine 156.

The protein belongs to the purine/pyrimidine phosphoribosyltransferase family. PyrE subfamily. As to quaternary structure, homodimer. Mg(2+) serves as cofactor.

The catalysed reaction is orotidine 5'-phosphate + diphosphate = orotate + 5-phospho-alpha-D-ribose 1-diphosphate. It participates in pyrimidine metabolism; UMP biosynthesis via de novo pathway; UMP from orotate: step 1/2. In terms of biological role, catalyzes the transfer of a ribosyl phosphate group from 5-phosphoribose 1-diphosphate to orotate, leading to the formation of orotidine monophosphate (OMP). The sequence is that of Orotate phosphoribosyltransferase from Pseudomonas putida (strain GB-1).